Reading from the N-terminus, the 397-residue chain is Serpin B10 (397 aa).

The short motif at 74 to 77 is the Nuclear localization signal element; it reads KKRK.

Belongs to the serpin family. Ov-serpin subfamily.

It is found in the nucleus. The protein localises to the cytoplasm. Functionally, protease inhibitor that may play a role in the regulation of protease activities during hematopoiesis and apoptosis induced by TNF. May regulate protease activities in the cytoplasm and in the nucleus. The protein is Serpin B10 (SERPINB10) of Plecturocebus moloch (Dusky titi monkey).